A 101-amino-acid chain; its full sequence is Integration host factor subunit alpha (101 aa).

The protein belongs to the bacterial histone-like protein family. As to quaternary structure, heterodimer of an alpha and a beta chain.

Its function is as follows. This protein is one of the two subunits of integration host factor, a specific DNA-binding protein that functions in genetic recombination as well as in transcriptional and translational control. In Halorhodospira halophila (strain DSM 244 / SL1) (Ectothiorhodospira halophila (strain DSM 244 / SL1)), this protein is Integration host factor subunit alpha.